The sequence spans 222 residues: 3-dehydroquinate dehydratase (222 aa).

Residues 29–31 (ELR) and Arg-55 contribute to the 3-dehydroquinate site. The active-site Proton donor/acceptor is His-112. The Schiff-base intermediate with substrate role is filled by Lys-139. 3-dehydroquinate-binding residues include Arg-178, Ser-199, and Gln-203.

It belongs to the type-I 3-dehydroquinase family. In terms of assembly, homodimer.

The enzyme catalyses 3-dehydroquinate = 3-dehydroshikimate + H2O. It functions in the pathway metabolic intermediate biosynthesis; chorismate biosynthesis; chorismate from D-erythrose 4-phosphate and phosphoenolpyruvate: step 3/7. Its function is as follows. Involved in the third step of the chorismate pathway, which leads to the biosynthesis of aromatic amino acids. Catalyzes the cis-dehydration of 3-dehydroquinate (DHQ) and introduces the first double bond of the aromatic ring to yield 3-dehydroshikimate. This Dehalococcoides mccartyi (strain ATCC BAA-2266 / KCTC 15142 / 195) (Dehalococcoides ethenogenes (strain 195)) protein is 3-dehydroquinate dehydratase.